We begin with the raw amino-acid sequence, 475 residues long: Ribulose bisphosphate carboxylase large chain (475 aa).

A propeptide spanning residues 1–2 (MS) is cleaved from the precursor. Residue Pro3 is modified to N-acetylproline. Lys14 carries the post-translational modification N6,N6,N6-trimethyllysine. The substrate site is built by Asn123 and Thr173. Lys175 acts as the Proton acceptor in catalysis. Residue Lys177 participates in substrate binding. Residues Lys201, Asp203, and Glu204 each coordinate Mg(2+). An N6-carboxylysine modification is found at Lys201. His294 (proton acceptor) is an active-site residue. The substrate site is built by Arg295, His327, and Ser379.

The protein belongs to the RuBisCO large chain family. Type I subfamily. As to quaternary structure, heterohexadecamer of 8 large chains and 8 small chains. It depends on Mg(2+) as a cofactor.

It localises to the plastid. The protein resides in the chloroplast. The catalysed reaction is 2 (2R)-3-phosphoglycerate + 2 H(+) = D-ribulose 1,5-bisphosphate + CO2 + H2O. The enzyme catalyses D-ribulose 1,5-bisphosphate + O2 = 2-phosphoglycolate + (2R)-3-phosphoglycerate + 2 H(+). RuBisCO catalyzes two reactions: the carboxylation of D-ribulose 1,5-bisphosphate, the primary event in carbon dioxide fixation, as well as the oxidative fragmentation of the pentose substrate in the photorespiration process. Both reactions occur simultaneously and in competition at the same active site. This is Ribulose bisphosphate carboxylase large chain from Chlorella vulgaris (Green alga).